The following is a 535-amino-acid chain: Peptide chain release factor 3 (535 aa).

Residues 8 to 276 (ARRRTFAIIS…ALVDLAPQPG (269 aa)) enclose the tr-type G domain. GTP-binding positions include 17 to 24 (SHPDAGKT), 85 to 89 (DTPGH), and 139 to 142 (NKMD).

This sequence belongs to the TRAFAC class translation factor GTPase superfamily. Classic translation factor GTPase family. PrfC subfamily.

The protein localises to the cytoplasm. Its function is as follows. Increases the formation of ribosomal termination complexes and stimulates activities of RF-1 and RF-2. It binds guanine nucleotides and has strong preference for UGA stop codons. It may interact directly with the ribosome. The stimulation of RF-1 and RF-2 is significantly reduced by GTP and GDP, but not by GMP. The protein is Peptide chain release factor 3 of Bordetella avium (strain 197N).